We begin with the raw amino-acid sequence, 43 residues long: B melanoma antigen 1 (43 aa).

An N-terminal signal peptide occupies residues 1 to 17; sequence MAARAVFLALSAQLLQA.

It belongs to the BAGE family. Not expressed in normal tissues, except in testis. Expressed with significant proportion in melanomas, but also in tumors of various histological origins, such as bladder carcinomas, head and neck squamous cell carcinomas, lung and breast carcinomas. Not expressed in renal, colorectal and prostatic carcinomas, leukemias and lymphomas. More frequently expressed in metastatic melanomas than in primary melanomas.

The protein localises to the secreted. Its function is as follows. Unknown. Antigen recognized on a melanoma by autologous cytolytic T-lymphocytes. The chain is B melanoma antigen 1 (BAGE) from Homo sapiens (Human).